A 388-amino-acid polypeptide reads, in one-letter code: Succinate--CoA ligase [ADP-forming] subunit beta (388 aa).

An ATP-grasp domain is found at 9 to 245; it reads KALLKEYGMP…KSQENERELK (237 aa). Residues Lys46, 53–55, Glu100, Tyr103, and Glu108 contribute to the ATP site; that span reads GRG. Asn200 and Asp214 together coordinate Mg(2+). Substrate contacts are provided by residues Asn265 and 322–324; that span reads GIV.

Belongs to the succinate/malate CoA ligase beta subunit family. As to quaternary structure, heterotetramer of two alpha and two beta subunits. Requires Mg(2+) as cofactor.

The enzyme catalyses succinate + ATP + CoA = succinyl-CoA + ADP + phosphate. It catalyses the reaction GTP + succinate + CoA = succinyl-CoA + GDP + phosphate. The protein operates within carbohydrate metabolism; tricarboxylic acid cycle; succinate from succinyl-CoA (ligase route): step 1/1. Its function is as follows. Succinyl-CoA synthetase functions in the citric acid cycle (TCA), coupling the hydrolysis of succinyl-CoA to the synthesis of either ATP or GTP and thus represents the only step of substrate-level phosphorylation in the TCA. The beta subunit provides nucleotide specificity of the enzyme and binds the substrate succinate, while the binding sites for coenzyme A and phosphate are found in the alpha subunit. The protein is Succinate--CoA ligase [ADP-forming] subunit beta of Acinetobacter baumannii (strain AB307-0294).